A 317-amino-acid chain; its full sequence is Beta-ketoacyl-[acyl-carrier-protein] synthase III (317 aa).

Active-site residues include Cys112 and His244. The interval 245-249 (QANLR) is ACP-binding. Asn274 is an active-site residue.

Belongs to the thiolase-like superfamily. FabH family. In terms of assembly, homodimer.

Its subcellular location is the cytoplasm. It carries out the reaction malonyl-[ACP] + acetyl-CoA + H(+) = 3-oxobutanoyl-[ACP] + CO2 + CoA. It participates in lipid metabolism; fatty acid biosynthesis. Catalyzes the condensation reaction of fatty acid synthesis by the addition to an acyl acceptor of two carbons from malonyl-ACP. Catalyzes the first condensation reaction which initiates fatty acid synthesis and may therefore play a role in governing the total rate of fatty acid production. Possesses both acetoacetyl-ACP synthase and acetyl transacylase activities. Its substrate specificity determines the biosynthesis of branched-chain and/or straight-chain of fatty acids. In Pasteurella multocida (strain Pm70), this protein is Beta-ketoacyl-[acyl-carrier-protein] synthase III.